The following is a 196-amino-acid chain: MCWAAAIPIAISGAQAISGQNAQAKMIAAQTAAGRRQAMEIMRQTNIQNADLSLQARSKLEEASAELTSQNMQKVQAIGSIRAAIGESMLEGSSMDRIKRVTEGQFIREANMVTENYRRDYQAIFAQQLGGTQSAASQIDEIYKSEQKQKSKLQMVLDPLAIMGSSAASAYASGAFDSKSTTKAPIVAAKGTKTGR.

The protein belongs to the T7virus internal virion protein gp14 family. As to quaternary structure, interacts with the portal protein. Interacts with gp15.

The protein localises to the virion. Its subcellular location is the host cell outer membrane. Its function is as follows. Component of the cylindrical core that assembles on the inner surface of the capsid during capsid formation and plays a role in viral DNA ejection into the host cell. The inner core is composed of stacked rings of gp14, gp15 and gp16 proteins. Following binding to the host cell surface, the internal core is disassembled and gp14 is ejected along with gp15 and gp16 into the infected cell. May form a simple channel spanning the outer membrane. The polypeptide is Internal virion protein gp14 (Escherichia phage T7 (Bacteriophage T7)).